The sequence spans 204 residues: Large ribosomal subunit protein eL15 (204 aa).

Positions 172 to 182 are enriched in basic residues; that stretch reads RGLRGRGHLHN. Residues 172 to 204 form a disordered region; sequence RGLRGRGHLHNKAPPSRRANWKRNQTLSLPRYR. Residues 193 to 204 show a composition bias toward polar residues; the sequence is KRNQTLSLPRYR.

It belongs to the eukaryotic ribosomal protein eL15 family.

This chain is Large ribosomal subunit protein eL15 (RPL15), found in Petunia hybrida (Petunia).